The chain runs to 666 residues: Probable cytochrome c oxidase subunit 1 (666 aa).

Transmembrane regions (helical) follow at residues 16-36 (IPLIAGAVVLVAILAVLVWVV) and 57-77 (IGVMYILLASIMLLRGGSDAI). A heme b-binding site is contributed by His105. A run of 13 helical transmembrane segments spans residues 108–128 (IMIFFVAMPFVIGLMNLVVPL), 142–162 (SVGFWLTATGALLVNLSLVIG), 192–212 (SLQISGVGTLVAGINLVTTVL), 234–254 (SNLLIVAAFPILTATLAMLLL), 277–297 (LIWAWGHPEVYILVLPAFGIF), 315–335 (MVLATMAICVISFMVWLHHFF), 346–366 (IFGIASMIIAVPTGVKIYNWL), 380–400 (MLWAVGFMVTFIIGGLTGVLV), 413–433 (MFLVAHFHNVIIGGVLFGAFA), 456–476 (FWFTFLGFYVTFMPLYIAGML), 493–513 (WMLVAAAGMAVLTIGVICQIM), 591–611 (SPTGFICAFFATIMGFALIWH), and 612–632 (IWWMVILGGIGAFATFVVFAW). Cu cation-binding residues include His283, Tyr287, His332, and His333. Residues 283-287 (HPEVY) constitute a cross-link (1'-histidyl-3'-tyrosine (His-Tyr)). Heme b-binding residues include His418 and His420.

This sequence belongs to the heme-copper respiratory oxidase family.

Its subcellular location is the cell membrane. The catalysed reaction is 4 Fe(II)-[cytochrome c] + O2 + 8 H(+)(in) = 4 Fe(III)-[cytochrome c] + 2 H2O + 4 H(+)(out). It functions in the pathway energy metabolism; oxidative phosphorylation. The sequence is that of Probable cytochrome c oxidase subunit 1 from Bradyrhizobium diazoefficiens (strain JCM 10833 / BCRC 13528 / IAM 13628 / NBRC 14792 / USDA 110).